The chain runs to 1170 residues: Type I restriction enzyme EcoKI endonuclease subunit (1170 aa).

A coiled-coil region spans residues 143–229 (YHQEVLTLKQ…QERKAYHKEI (87 aa)). The segment at residues 431 to 450 (NQWFADNPGMSELGLRYYQE) is a DNA-binding region (H-T-H motif). One can recognise a Helicase ATP-binding domain in the interval 458 to 639 (KAIVKGQQEI…GEPVYRYTYR (182 aa)). 472 to 478 (ATGTGKT) contributes to the ATP binding site. The DEAH box motif lies at 574–577 (DEAH). The Helicase C-terminal domain maps to 714–879 (ELTNYLDPTG…TLVNEITDSE (166 aa)).

Belongs to the HsdR family. In terms of assembly, the type I restriction/modification system is composed of three polypeptides R, M and S. The restriction enzyme has stoichiometry R(2)M(2)S(1). The methyltransferase is composed of M(2)S(1). (Microbial infection) Interacts with Escherichia phage T7 protein Ocr; this interaction leads to the inhibition of the type I bifunctional endonuclease and methyltransferase restriction enzyme R.EcoKI composed of R(2)M(2)S(1). Upon purification after overexpression about one-third has the initiating methionine removed.

It carries out the reaction Endonucleolytic cleavage of DNA to give random double-stranded fragments with terminal 5'-phosphates, ATP is simultaneously hydrolyzed.. In terms of biological role, the subtype A restriction (R) subunit of a type I restriction enzyme that recognizes 5'-AACN(6)GTGC-3' and cleaves a random distance away. The R subunit is required for both endonuclease and ATPase activities but not for modification. Has endonucleolytic activity that requires Mg(2+), ATP and S-adenosyl-L-methionine (SAM); ATP can be replaced by dATP, no tested molecule could substitute for SAM. Generates double-stranded DNA with no nicks, by cutting one strand then the other within a few seconds. Cleaves only non-methylated DNA, hemi-methylated and fully methylated DNA are not substrates. After locating a non-methylated recognition site, the enzyme complex serves as a molecular motor that translocates DNA in an ATP-dependent manner until a collision occurs that triggers cleavage. The polypeptide is Type I restriction enzyme EcoKI endonuclease subunit (Escherichia coli (strain K12)).